Consider the following 157-residue polypeptide: UPF0225 protein PSPPH_1399 (157 aa).

It belongs to the UPF0225 family.

The protein is UPF0225 protein PSPPH_1399 of Pseudomonas savastanoi pv. phaseolicola (strain 1448A / Race 6) (Pseudomonas syringae pv. phaseolicola (strain 1448A / Race 6)).